Here is a 438-residue protein sequence, read N- to C-terminus: Aspartate--tRNA(Asp) ligase (438 aa).

Glutamate 170 contributes to the L-aspartate binding site. Residues 192 to 195 (QLYK) form an aspartate region. An L-aspartate-binding site is contributed by arginine 214. ATP is bound by residues 214-216 (RAE), 222-224 (RHL), and glutamate 361. Mg(2+)-binding residues include glutamate 361 and serine 364. 2 residues coordinate L-aspartate: serine 364 and arginine 368. 409 to 412 (GAER) is an ATP binding site.

It belongs to the class-II aminoacyl-tRNA synthetase family. Type 2 subfamily. In terms of assembly, homodimer. Mg(2+) is required as a cofactor.

It localises to the cytoplasm. It carries out the reaction tRNA(Asp) + L-aspartate + ATP = L-aspartyl-tRNA(Asp) + AMP + diphosphate. In terms of biological role, catalyzes the attachment of L-aspartate to tRNA(Asp) in a two-step reaction: L-aspartate is first activated by ATP to form Asp-AMP and then transferred to the acceptor end of tRNA(Asp). The polypeptide is Aspartate--tRNA(Asp) ligase (Pyrococcus horikoshii (strain ATCC 700860 / DSM 12428 / JCM 9974 / NBRC 100139 / OT-3)).